The chain runs to 1128 residues: Nck-associated protein 1 (1128 aa).

The disordered stretch occupies residues 640–665; sequence AVNKKSKKQTGKKGEPEREKPGVESM. The span at 651-665 shows a compositional bias: basic and acidic residues; the sequence is KKGEPEREKPGVESM. Residues 995–1015 form a helical membrane-spanning segment; sequence IACLLMVFVAVSLPTLASNVM.

This sequence belongs to the HEM-1/HEM-2 family.

It is found in the cell membrane. It localises to the cell projection. Its subcellular location is the lamellipodium membrane. Functionally, part of the WAVE complex that regulates lamellipodia formation. The WAVE complex regulates actin filament reorganization via its interaction with the Arp2/3 complex. Actin remodeling activity is regulated by RAC1. Plays a role in neural tube closure. The sequence is that of Nck-associated protein 1 (nckap1) from Xenopus laevis (African clawed frog).